Consider the following 62-residue polypeptide: Small ribosomal subunit protein eS17 (62 aa).

It belongs to the eukaryotic ribosomal protein eS17 family.

The chain is Small ribosomal subunit protein eS17 from Methanocaldococcus jannaschii (strain ATCC 43067 / DSM 2661 / JAL-1 / JCM 10045 / NBRC 100440) (Methanococcus jannaschii).